The following is a 476-amino-acid chain: Glutamate--tRNA ligase (476 aa).

Residues 9–19 carry the 'HIGH' region motif; sequence PSPTGTLHIGT. The short motif at 248-252 is the 'KMSKS' region element; it reads KLSKR. K251 is an ATP binding site.

It belongs to the class-I aminoacyl-tRNA synthetase family. Glutamate--tRNA ligase type 1 subfamily. As to quaternary structure, monomer.

It is found in the cytoplasm. The catalysed reaction is tRNA(Glu) + L-glutamate + ATP = L-glutamyl-tRNA(Glu) + AMP + diphosphate. In terms of biological role, catalyzes the attachment of glutamate to tRNA(Glu) in a two-step reaction: glutamate is first activated by ATP to form Glu-AMP and then transferred to the acceptor end of tRNA(Glu). This is Glutamate--tRNA ligase from Prochlorococcus marinus (strain MIT 9313).